The sequence spans 811 residues: G-type lectin S-receptor-like serine/threonine-protein kinase LECRK2 (811 aa).

The first 23 residues, 1 to 23, serve as a signal peptide directing secretion; the sequence is MAPLLFLPILQLLLLYCTKSAQA. In terms of domain architecture, Bulb-type lectin spans 24-153; the sequence is QLNISIGSSL…DGATKWESFG (130 aa). Residues 24–464 lie on the Extracellular side of the membrane; it reads QLNISIGSSL…DKKYWILGSS (441 aa). 7 N-linked (GlcNAc...) asparagine glycosylation sites follow: Asn-26, Asn-39, Asn-59, Asn-219, Asn-226, Asn-237, and Asn-242. Residues 292 to 344 form the EGF-like; atypical domain; the sequence is PENICQTIQTKVGSGACGFNSYCTFDGTKNTTNCLCPQRYKFFDNERTYKGCR. Intrachain disulfides connect Cys-296–Cys-314, Cys-308–Cys-325, Cys-327–Cys-343, Cys-389–Cys-411, and Cys-393–Cys-399. An N-linked (GlcNAc...) asparagine glycan is attached at Asn-321. One can recognise a PAN domain in the interval 352 to 436; that stretch reads CDLDETAAMV…LQATVLLKVP (85 aa). A helical membrane pass occupies residues 465 to 485; sequence LFFGSSVLVNFLLIFVLLFGT. At 486–811 the chain is on the cytoplasmic side; the sequence is YCSITSRKKT…DPSSYISSLA (326 aa). Positions 521 to 795 constitute a Protein kinase domain; sequence GGFHEVLGTG…KVMQMLDGAV (275 aa). ATP is bound by residues 527–535 and Lys-551; that span reads LGTGASGIV. The active-site Proton acceptor is Asp-645.

It belongs to the protein kinase superfamily. Ser/Thr protein kinase family.

The protein resides in the membrane. The enzyme catalyses L-seryl-[protein] + ATP = O-phospho-L-seryl-[protein] + ADP + H(+). It catalyses the reaction L-threonyl-[protein] + ATP = O-phospho-L-threonyl-[protein] + ADP + H(+). Functionally, involved in resistance against the herbivorous insect brown planthopper (N.lugens, BPH). Member of the BPH3 (BPH resistance locus 3) cluster which contains LECRK1, LECRK2 and LECRK3. The sequence is that of G-type lectin S-receptor-like serine/threonine-protein kinase LECRK2 from Oryza sativa subsp. japonica (Rice).